A 258-amino-acid chain; its full sequence is NAD-capped RNA hydrolase NudC (258 aa).

Arginine 69 provides a ligand contact to substrate. Zn(2+) contacts are provided by cysteine 98 and cysteine 101. Glutamate 111 serves as a coordination point for substrate. 2 residues coordinate Zn(2+): cysteine 116 and cysteine 119. Residue tyrosine 124 coordinates substrate. The Nudix hydrolase domain occupies 125–248 (PQIAPCIIVA…TVARRLIEDT (124 aa)). Residues alanine 158, glutamate 174, and glutamate 178 each contribute to the a divalent metal cation site. Positions 159 to 180 (GFVEVGETLEQTVAREVMEESG) match the Nudix box motif. Residue 192–199 (QPWPFPMS) participates in substrate binding. Glutamate 219 serves as a coordination point for a divalent metal cation. A substrate-binding site is contributed by alanine 241.

The protein belongs to the Nudix hydrolase family. NudC subfamily. As to quaternary structure, homodimer. Requires Mg(2+) as cofactor. The cofactor is Mn(2+). Zn(2+) serves as cofactor.

The enzyme catalyses a 5'-end NAD(+)-phospho-ribonucleoside in mRNA + H2O = a 5'-end phospho-adenosine-phospho-ribonucleoside in mRNA + beta-nicotinamide D-ribonucleotide + 2 H(+). It carries out the reaction NAD(+) + H2O = beta-nicotinamide D-ribonucleotide + AMP + 2 H(+). It catalyses the reaction NADH + H2O = reduced beta-nicotinamide D-ribonucleotide + AMP + 2 H(+). Its function is as follows. mRNA decapping enzyme that specifically removes the nicotinamide adenine dinucleotide (NAD) cap from a subset of mRNAs by hydrolyzing the diphosphate linkage to produce nicotinamide mononucleotide (NMN) and 5' monophosphate mRNA. The NAD-cap is present at the 5'-end of some mRNAs and stabilizes RNA against 5'-processing. Has preference for mRNAs with a 5'-end purine. Catalyzes the hydrolysis of a broad range of dinucleotide pyrophosphates. The protein is NAD-capped RNA hydrolase NudC of Enterobacter sp. (strain 638).